A 468-amino-acid chain; its full sequence is Acetyl-CoA decarbonylase/synthase complex subunit gamma (468 aa).

The 60-residue stretch at 1 to 60 folds into the 4Fe-4S domain; it reads MKINSPLEAYKYLPQTNCGECGEATCMAFASKLIDRSGKTSDCPPLIKEKKFAKKLAELD. [4Fe-4S] cluster contacts are provided by Cys18, Cys21, Cys26, and Cys43.

Heterodimer of delta and gamma chains. The ACDS complex is made up of alpha, epsilon, beta, gamma and delta chains with a probable stoichiometry of (alpha(2)epsilon(2))(4)-beta(8)-(gamma(1)delta(1))(8). Corrinoid is required as a cofactor. The cofactor is [4Fe-4S] cluster.

The enzyme catalyses 5,6,7,8-tetrahydrosarcinapterin + methyl-Co(III)-[corrinoid Fe-S protein] = 5-methyltetrahydrosarcinapterin + Co(I)-[corrinoid Fe-S protein] + H(+). It functions in the pathway one-carbon metabolism; methanogenesis from acetate. Its function is as follows. Part of a complex that catalyzes the reversible cleavage of acetyl-CoA, allowing growth on acetate as sole source of carbon and energy. This is Acetyl-CoA decarbonylase/synthase complex subunit gamma from Methanosarcina acetivorans (strain ATCC 35395 / DSM 2834 / JCM 12185 / C2A).